Consider the following 44-residue polypeptide: U4-ctenitoxin-Pk1a (44 aa).

5 disulfide bridges follow: C4–C18, C11–C24, C15–C42, C17–C33, and C26–C31.

In terms of tissue distribution, expressed by the venom gland.

The protein resides in the secreted. In terms of biological role, neurotoxin. Causes spastic paralysis and death in mice within 10 minutes at dose levels of 3 ug per mouse. This chain is U4-ctenitoxin-Pk1a, found in Phoneutria keyserlingi (Brazilian wandering spider).